We begin with the raw amino-acid sequence, 233 residues long: Favin (233 aa).

The Mn(2+) site is built by glutamate 120 and aspartate 122. Positions 122, 124, 126, and 130 each coordinate Ca(2+). Mn(2+) is bound by residues aspartate 130 and histidine 137. Asparagine 168 is a glycosylation site (N-linked (GlcNAc...) asparagine).

The protein belongs to the leguminous lectin family. As to quaternary structure, heterodimer of an alpha and a beta chain.

This Vicia faba (Broad bean) protein is Favin.